We begin with the raw amino-acid sequence, 316 residues long: L-lactate dehydrogenase 3 (316 aa).

The NAD(+) site is built by V16, D37, R42, and Y68. R91 is a substrate binding site. Residues S104, 121–123 (ASN), and T146 contribute to the NAD(+) site. 123–126 (NPVD) provides a ligand contact to substrate. 151–154 (DSSR) is a binding site for substrate. Beta-D-fructose 1,6-bisphosphate-binding residues include R156 and H171. Residue H178 is the Proton acceptor of the active site. T233 contributes to the substrate binding site.

The protein belongs to the LDH/MDH superfamily. LDH family. In terms of assembly, homotetramer.

It localises to the cytoplasm. It catalyses the reaction (S)-lactate + NAD(+) = pyruvate + NADH + H(+). Its pathway is fermentation; pyruvate fermentation to lactate; (S)-lactate from pyruvate: step 1/1. With respect to regulation, allosterically activated by fructose 1,6-bisphosphate (FBP). In terms of biological role, catalyzes the conversion of lactate to pyruvate. The polypeptide is L-lactate dehydrogenase 3 (Bacillus thuringiensis subsp. konkukian (strain 97-27)).